A 512-amino-acid chain; its full sequence is ATP synthase subunit alpha, chloroplastic (512 aa).

170 to 177 (GDRQTGKT) provides a ligand contact to ATP.

The protein belongs to the ATPase alpha/beta chains family. As to quaternary structure, F-type ATPases have 2 components, CF(1) - the catalytic core - and CF(0) - the membrane proton channel. CF(1) has five subunits: alpha(3), beta(3), gamma(1), delta(1), epsilon(1). CF(0) has four main subunits: a, b, b' and c.

Its subcellular location is the plastid. It is found in the chloroplast thylakoid membrane. It catalyses the reaction ATP + H2O + 4 H(+)(in) = ADP + phosphate + 5 H(+)(out). Produces ATP from ADP in the presence of a proton gradient across the membrane. The alpha chain is a regulatory subunit. The sequence is that of ATP synthase subunit alpha, chloroplastic from Chaetosphaeridium globosum (Charophycean green alga).